Here is a 907-residue protein sequence, read N- to C-terminus: Chloride channel protein 2 (907 aa).

At 1 to 93 the chain is on the cytoplasmic side; the sequence is MAAATAAAAT…RCHKFLVSRV (93 aa). The segment at 22–40 is essential for channel gating by both voltage and cell volume; that stretch reads QYEQTLMYGRYTQELGAFA. T26 is subject to Phosphothreonine. Residues 42-55 are modulates channel gating by both voltage and cell volume; it reads EEAARIRLGGPEPW. 2 consecutive transmembrane segments (helical) span residues 94–127 and 136–161; these read GEDWIFLVLLGLLMALVSWAMDYAIAVCLQAQQW and ILLQYLAWVTYPVVLITFSAGFTQIL. The Selectivity filter part_1 motif lies at 167-171; sequence GSGIP. An intramembrane region (helical) is located at residues 170-177; sequence IPEMKTIL. The next 2 membrane-spanning stretches (helical) occupy residues 186 to 204 and 211 to 229; these read LTLKTFVAKVIGLTCALGS and EGPFVHIASMCAALLSKFL. The Selectivity filter part_2 motif lies at 209–213; the sequence is GKEGP. 2 intramembrane regions (helical) span residues 245–257 and 261–269; these read MLAAACAVGVGCC and PIGGVLFSI. Transmembrane regions (helical) follow at residues 281–301, 327–355, 364–383, 435–455, and 463–486; these read YWRGFFAATFSAFIFRVLAVW, LPAFAVIGIASGFGGALFVYLNRKIVQVM, FLMKKRLLFPALVTLLISTL, ANVFLTLVIFILMKFWMSALA, and GAFMPVFVIGAAFGRLVGESMAAW. The Selectivity filter part_3 signature appears at 463–467; the sequence is GAFMP. The segment at residues 503–517 is an intramembrane region (helical); the sequence is GGYAVVGAAALAGAV. Positions 518 to 519 form an intramembrane region, note=Loop between two helices; it reads TH. The segment at residues 520–531 is an intramembrane region (helical); it reads TVSTAVIVFELT. The note=Loop between two helices intramembrane region spans 532–536; the sequence is GQIAH. A helical membrane pass occupies residues 537-554; sequence ILPVMIAVILANAVAQSL. Residues 555–907 are Cytoplasmic-facing; the sequence is QPSLYDSIIR…TPSDSDDKCQ (353 aa). The CBS 1 domain maps to 590–648; the sequence is MVRDVPHVALSCTFRDLRLALHRTKGRMLALVESPESMILLGSIERSQVVALLGAQLSP. Basic residues predominate over residues 650–660; sequence RRRQHMQKLRK. A disordered region spans residues 650–720; the sequence is RRRQHMQKLR…NATSLQEGTT (71 aa). Residues 664–678 are compositionally biased toward low complexity; that stretch reads SPPSDQESPPSSETS. Basic residues predominate over residues 696–705; the sequence is QTHKPLKPAL. The segment covering 710 to 720 has biased composition (polar residues); it reads SNATSLQEGTT. Phosphoserine is present on S767. Residues 799–859 form the CBS 2 domain; that stretch reads IDPAPFQLVE…GSVTAQGVKV (61 aa). Positions 821–822 match the Basolateral membrane sorting motif; sequence LL. Positions 865–907 are disordered; it reads SFRDSATSSSDTETTEVHALWGPRSRHGLPREGTPSDSDDKCQ.

Belongs to the chloride channel (TC 2.A.49) family. ClC-2/CLCN2 subfamily. As to quaternary structure, homodimer. Interacts with auxiliary subunit HEPACAM. Phosphorylated. Activated by dephosphorylation. As to expression, ubiquitously expressed. Expressed in neurons and glial cells (at protein level).

The protein resides in the cell membrane. The protein localises to the basolateral cell membrane. It localises to the cell projection. Its subcellular location is the dendritic spine membrane. It is found in the axon. It carries out the reaction chloride(in) = chloride(out). The catalysed reaction is thiocyanate(in) = thiocyanate(out). The enzyme catalyses bromide(in) = bromide(out). It catalyses the reaction nitrate(in) = nitrate(out). It carries out the reaction iodide(out) = iodide(in). Its activity is regulated as follows. Common gate kinetics are down-regulated by intracellular ATP. Inhibited by AK-42, a derivative of meclofenamate. Inhibited by Cd(2+). Inhibited by Zn(2+) and PKC activation. Inhibited at acidic pH. CCLN2:HEPACAM channel conductance is up-regulated upon hypo-osmolarity. Its function is as follows. Voltage-gated and osmosensitive chloride channel. Forms a homodimeric channel where each subunit has its own ion conduction pathway. Conducts double-barreled currents controlled by two types of gates, two fast glutamate gates that control each subunit independently and a slow common gate that opens and shuts off both subunits simultaneously. Displays inward rectification currents activated upon membrane hyperpolarization and extracellular hypotonicity. Contributes to chloride conductance involved in neuron excitability. In hippocampal neurons, generates a significant part of resting membrane conductance and provides an additional chloride efflux pathway to prevent chloride accumulation in dendrites upon GABA receptor activation. In glia, associates with the auxiliary subunit HEPACAM/GlialCAM at astrocytic processes and myelinated fiber tracts where it may regulate transcellular chloride flux buffering extracellular chloride and potassium concentrations. Regulates aldosterone production in adrenal glands. The opening of CLCN2 channels at hyperpolarized membrane potentials in the glomerulosa causes cell membrane depolarization, activation of voltage-gated calcium channels and increased expression of aldosterone synthase, the rate-limiting enzyme for aldosterone biosynthesis. Contributes to chloride conductance in retinal pigment epithelium involved in phagocytosis of shed photoreceptor outer segments and photoreceptor renewal. Conducts chloride currents at the basolateral membrane of epithelial cells with a role in chloride reabsorption rather than secretion. Permeable to small monovalent anions with chloride &gt; thiocyanate &gt; bromide &gt; nitrate &gt; iodide ion selectivity. This is Chloride channel protein 2 (Clcn2) from Rattus norvegicus (Rat).